Here is a 143-residue protein sequence, read N- to C-terminus: Flagellar assembly factor FliW (143 aa).

This sequence belongs to the FliW family. Interacts with translational regulator CsrA and flagellin(s).

It localises to the cytoplasm. Acts as an anti-CsrA protein, binds CsrA and prevents it from repressing translation of its target genes, one of which is flagellin. Binds to flagellin and participates in the assembly of the flagellum. The sequence is that of Flagellar assembly factor FliW from Clostridium botulinum (strain 657 / Type Ba4).